The sequence spans 246 residues: DNA repair protein RecO (246 aa).

It belongs to the RecO family.

Functionally, involved in DNA repair and RecF pathway recombination. This is DNA repair protein RecO from Pelobacter propionicus (strain DSM 2379 / NBRC 103807 / OttBd1).